A 988-amino-acid chain; its full sequence is Mediator of RNA polymerase II transcription subunit 24 (988 aa).

6 short sequence motifs (LXXLL motif) span residues Leu-128–Leu-132, Leu-341–Leu-345, Leu-445–Leu-449, Leu-555–Leu-559, Leu-786–Leu-790, and Leu-856–Leu-860.

Belongs to the Mediator complex subunit 24 family. As to quaternary structure, component of the Mediator complex.

It is found in the nucleus. Functionally, component of the Mediator complex, a coactivator involved in the regulated transcription of nearly all RNA polymerase II-dependent genes. Mediator functions as a bridge to convey information from gene-specific regulatory proteins to the basal RNA polymerase II transcription machinery. Mediator is recruited to promoters by direct interactions with regulatory proteins and serves as a scaffold for the assembly of a functional preinitiation complex with RNA polymerase II and the general transcription factors. This chain is Mediator of RNA polymerase II transcription subunit 24 (med24), found in Xenopus laevis (African clawed frog).